The following is a 468-amino-acid chain: GDNF family receptor alpha-1 (468 aa).

Residues 1-24 (MFLATLYFALPLLDLLMSAEVSGG) form the signal peptide. A run of 3 repeats spans residues 25 to 113 (DRLD…LQGN), 150 to 238 (KGNN…YEER), and 239 to 342 (ERPN…KNAI). A disulfide bridge connects residues cysteine 36 and cysteine 42. Asparagine 59 carries N-linked (GlcNAc...) asparagine glycosylation. Cystine bridges form between cysteine 154–cysteine 214, cysteine 161–cysteine 167, cysteine 178–cysteine 192, cysteine 187–cysteine 233, cysteine 216–cysteine 221, cysteine 243–cysteine 313, cysteine 250–cysteine 256, cysteine 267–cysteine 285, cysteine 277–cysteine 337, and cysteine 315–cysteine 325. 2 N-linked (GlcNAc...) asparagine glycosylation sites follow: asparagine 347 and asparagine 406. Serine 430 carries GPI-anchor amidated serine lipidation. A propeptide spans 431-468 (HITTKSMAAPPSCSLSSLPVLMLTALAALLSVSLAETS) (removed in mature form).

It belongs to the GDNFR family. Interacts with GDNF ligand and RET: forms a 2:2:2 ternary complex composed of GDNF ligand, GFRA1 and RET receptor. Interacts with SORL1, either alone or in complex with GDNF. Interaction between SORL1 and GFRA1 leads to GFRA1 internalization, but not degradation. As to expression, expressed in liver, brain, kidney and cochlea.

The protein localises to the cell membrane. It localises to the golgi apparatus. It is found in the trans-Golgi network. The protein resides in the endosome. Its subcellular location is the multivesicular body. Coreceptor for GDNF, a neurotrophic factor that enhances survival and morphological differentiation of dopaminergic neurons and increases their high-affinity dopamine uptake. GDNF-binding leads to autophosphorylation and activation of the RET receptor. This Rattus norvegicus (Rat) protein is GDNF family receptor alpha-1 (Gfra1).